We begin with the raw amino-acid sequence, 157 residues long: Transcriptional repressor NrdR (157 aa).

Positions 1–21 are disordered; sequence MKCPHCGNNGSRVVDSRPTDE. Residues 3–34 fold into a zinc finger; that stretch reads CPHCGNNGSRVVDSRPTDEGRVIRRRRECEKC. The ATP-cone domain maps to 49 to 139; the sequence is LLVIKKNGSR…VYRQFKDMHV (91 aa).

It belongs to the NrdR family. Zn(2+) is required as a cofactor.

In terms of biological role, negatively regulates transcription of bacterial ribonucleotide reductase nrd genes and operons by binding to NrdR-boxes. This Pediococcus pentosaceus (strain ATCC 25745 / CCUG 21536 / LMG 10740 / 183-1w) protein is Transcriptional repressor NrdR.